Consider the following 50-residue polypeptide: Disintegrin pyramidin-A (50 aa).

Residues 1-47 (DCASGPCCRDCKFLKEGTICKRARGDNMDDYCNGKTCDCPRNPHKGE) form the Disintegrin domain. 4 cysteine pairs are disulfide-bonded: Cys-2/Cys-11, Cys-7/Cys-32, Cys-8/Cys-37, and Cys-20/Cys-39. The short motif at 24–26 (RGD) is the Cell attachment site element.

The protein belongs to the venom metalloproteinase (M12B) family. P-II subfamily. P-IIa sub-subfamily. In terms of assembly, monomer (disintegrin). Expressed by the venom gland.

Its subcellular location is the secreted. Its function is as follows. Inhibits ADP-induced human platelet aggregation. In Echis pyramidum leakeyi (Leakey's carpet viper), this protein is Disintegrin pyramidin-A.